We begin with the raw amino-acid sequence, 220 residues long: Iron-sulfur cluster repair protein YtfE (220 aa).

Belongs to the RIC family. YtfE subfamily. In terms of assembly, homodimer.

It is found in the cytoplasm. Its function is as follows. Di-iron-containing protein involved in the repair of iron-sulfur clusters damaged by oxidative and nitrosative stress conditions. This Escherichia coli O8 (strain IAI1) protein is Iron-sulfur cluster repair protein YtfE.